A 457-amino-acid polypeptide reads, in one-letter code: B-cell linker protein (457 aa).

A disordered region spans residues Lys-38 to Gln-306. Residues Pro-57–Asn-74 show a composition bias toward acidic residues. Residues Tyr-72, Tyr-84, Tyr-96, Tyr-178, and Tyr-189 each carry the phosphotyrosine; by SYK modification. Acidic residues predominate over residues Leu-172–Glu-187. Composition is skewed to polar residues over residues Val-206–His-218 and Pro-256–Asn-270. Positions Cys-272–Asp-290 are enriched in basic and acidic residues. Positions Trp-347–Val-454 constitute an SH2 domain.

Associates with PLCG1, VAV1 and NCK1 in a B-cell antigen receptor-dependent fashion. Interacts with VAV3, PLCG2 and GRB2. Interacts through its SH2 domain with CD79A. Interacts (via SH2 domain) with SYK; phosphorylated and activated by SYK. Interacts (via SH2 domain) with SCIMP; this interaction is dependent on phosphorylation of SCIMP 'Tyr-120'. Post-translationally, following BCR activation, phosphorylated on tyrosine residues by SYK and LYN. When phosphorylated, serves as a scaffold to assemble downstream targets of antigen activation, including PLCG1, VAV1, GRB2 and NCK1. Phosphorylation of Tyr-84, Tyr-178 and Tyr-189 facilitates PLCG1 binding. Phosphorylation of Tyr-96 facilitates BTK binding. Phosphorylation of Tyr-72 facilitates VAV1 and NCK1 binding. Phosphorylation is required for both Ca(2+) and MAPK signaling pathways.

The protein localises to the cytoplasm. It is found in the cell membrane. In terms of biological role, functions as a central linker protein, downstream of the B-cell receptor (BCR), bridging the SYK kinase to a multitude of signaling pathways and regulating biological outcomes of B-cell function and development. Plays a role in the activation of ERK/EPHB2, MAP kinase p38 and JNK. Modulates AP1 activation. Important for the activation of NF-kappa-B and NFAT. Plays an important role in BCR-mediated PLCG1 and PLCG2 activation and Ca(2+) mobilization and is required for trafficking of the BCR to late endosomes. However, does not seem to be required for pre-BCR-mediated activation of MAP kinase and phosphatidyl-inositol 3 (PI3) kinase signaling. May be required for the RAC1-JNK pathway. Plays a critical role in orchestrating the pro-B cell to pre-B cell transition. May play an important role in BCR-induced B-cell apoptosis. The polypeptide is B-cell linker protein (Blnk) (Rattus norvegicus (Rat)).